Consider the following 474-residue polypeptide: Ribulose bisphosphate carboxylase large chain (474 aa).

Pro2 carries the post-translational modification N-acetylproline. Lys13 is modified (N6,N6,N6-trimethyllysine). The substrate site is built by Asn122 and Thr172. The active-site Proton acceptor is Lys174. Lys176 serves as a coordination point for substrate. 3 residues coordinate Mg(2+): Lys200, Asp202, and Glu203. An N6-carboxylysine modification is found at Lys200. The active-site Proton acceptor is His293. Substrate contacts are provided by Arg294, His326, and Ser378.

It belongs to the RuBisCO large chain family. Type I subfamily. Heterohexadecamer of 8 large chains and 8 small chains; disulfide-linked. The disulfide link is formed within the large subunit homodimers. It depends on Mg(2+) as a cofactor. Post-translationally, the disulfide bond which can form in the large chain dimeric partners within the hexadecamer appears to be associated with oxidative stress and protein turnover.

The protein localises to the plastid. It localises to the chloroplast. The enzyme catalyses 2 (2R)-3-phosphoglycerate + 2 H(+) = D-ribulose 1,5-bisphosphate + CO2 + H2O. The catalysed reaction is D-ribulose 1,5-bisphosphate + O2 = 2-phosphoglycolate + (2R)-3-phosphoglycerate + 2 H(+). In terms of biological role, ruBisCO catalyzes two reactions: the carboxylation of D-ribulose 1,5-bisphosphate, the primary event in carbon dioxide fixation, as well as the oxidative fragmentation of the pentose substrate in the photorespiration process. Both reactions occur simultaneously and in competition at the same active site. In Oltmannsiellopsis viridis (Marine flagellate), this protein is Ribulose bisphosphate carboxylase large chain.